The following is a 164-amino-acid chain: I-Kappa-B like protein F1 (164 aa).

ANK repeat units follow at residues 57–89 (HGRQ…NINA), 94–124 (TGNT…DLGA), and 128–157 (QQET…AYNN).

It belongs to the polydnaviridae I-Kappa-B-like protein family.

Its function is as follows. Suppresses the host immune response through NF-kappa-B inactivation. Possesses ankyrin repeat domains required for NF-kappa-B binding but lacks the regulatory regions required for dissociation from NF-kappa-B and degradation. Therefore, prevents host NF-kappa-B release and subsequent activation. The polypeptide is I-Kappa-B like protein F1 (F2) (Microplitis demolitor bracovirus (isolate Webb) (MdBV)).